We begin with the raw amino-acid sequence, 631 residues long: Alpha-dioxygenase 2 (631 aa).

The N-terminal stretch at 1-20 (MGFSPSSSWFLHPQLHHVVS) is a signal peptide. Residue His-157 coordinates heme b. Tyr-378 (proton acceptor) is an active-site residue. A heme b-binding site is contributed by His-381. Residue Asn-583 is glycosylated (N-linked (GlcNAc...) asparagine).

The protein belongs to the peroxidase family. Requires heme b as cofactor. In terms of tissue distribution, expressed in seedlings (cotyledons, young leaves, and hypocotyls), flowers, siliques and old leaves.

Functionally, alpha-dioxygenase that catalyzes the primary oxygenation of fatty acids into oxylipins. May be involved in the senescence process. This is Alpha-dioxygenase 2 (DOX2) from Arabidopsis thaliana (Mouse-ear cress).